A 176-amino-acid chain; its full sequence is Methylmalonyl-CoA epimerase, mitochondrial (176 aa).

The N-terminal 36 residues, 1–36 (MARVLKAAAANAVGLFSRLQAPIPTVRASSTSQPLD), are a transit peptide targeting the mitochondrion. The region spanning 47-176 (RLNHVAIAVP…GGVLVELEQA (130 aa)) is the VOC domain. His-50 provides a ligand contact to Co(2+). Lys-114 bears the N6-succinyllysine mark. His-122 serves as a coordination point for Co(2+). Lys-150 is subject to N6-acetyllysine; alternate. Residue Lys-150 is modified to N6-succinyllysine; alternate. Residue Glu-172 participates in Co(2+) binding.

Belongs to the methylmalonyl-CoA epimerase family.

It is found in the mitochondrion. The catalysed reaction is (R)-methylmalonyl-CoA = (S)-methylmalonyl-CoA. Methylmalonyl-CoA epimerase involved in propionyl-CoA metabolism. The sequence is that of Methylmalonyl-CoA epimerase, mitochondrial from Homo sapiens (Human).